The following is a 113-amino-acid chain: Small ribosomal subunit protein uS15 (113 aa).

This sequence belongs to the universal ribosomal protein uS15 family. In terms of assembly, part of the 30S ribosomal subunit. Forms a bridge to the 50S subunit in the 70S ribosome, contacting the 23S rRNA.

Its function is as follows. One of the primary rRNA binding proteins, it binds directly to 16S rRNA where it helps nucleate assembly of the platform of the 30S subunit by binding and bridging several RNA helices of the 16S rRNA. In terms of biological role, forms an intersubunit bridge (bridge B4) with the 23S rRNA of the 50S subunit in the ribosome. This Haemophilus influenzae (strain PittEE) protein is Small ribosomal subunit protein uS15.